We begin with the raw amino-acid sequence, 319 residues long: tRNA dimethylallyltransferase (319 aa).

ATP is bound at residue 9 to 16 (GPTAVGKS). 11–16 (TAVGKS) contributes to the substrate binding site. The interval 39–42 (DSMQ) is interaction with substrate tRNA.

The protein belongs to the IPP transferase family. In terms of assembly, monomer. Mg(2+) is required as a cofactor.

It catalyses the reaction adenosine(37) in tRNA + dimethylallyl diphosphate = N(6)-dimethylallyladenosine(37) in tRNA + diphosphate. In terms of biological role, catalyzes the transfer of a dimethylallyl group onto the adenine at position 37 in tRNAs that read codons beginning with uridine, leading to the formation of N6-(dimethylallyl)adenosine (i(6)A). This chain is tRNA dimethylallyltransferase, found in Thermobifida fusca (strain YX).